The sequence spans 381 residues: Alkanesulfonate monooxygenase (381 aa).

Belongs to the SsuD family. As to quaternary structure, homotetramer.

It catalyses the reaction an alkanesulfonate + FMNH2 + O2 = an aldehyde + FMN + sulfite + H2O + 2 H(+). Catalyzes the desulfonation of aliphatic sulfonates. The protein is Alkanesulfonate monooxygenase of Escherichia coli O6:H1 (strain CFT073 / ATCC 700928 / UPEC).